The chain runs to 96 residues: Large ribosomal subunit protein uL23 (96 aa).

This sequence belongs to the universal ribosomal protein uL23 family. In terms of assembly, part of the 50S ribosomal subunit. Contacts protein L29, and trigger factor when it is bound to the ribosome.

Its function is as follows. One of the early assembly proteins it binds 23S rRNA. One of the proteins that surrounds the polypeptide exit tunnel on the outside of the ribosome. Forms the main docking site for trigger factor binding to the ribosome. The sequence is that of Large ribosomal subunit protein uL23 from Nitratidesulfovibrio vulgaris (strain DSM 19637 / Miyazaki F) (Desulfovibrio vulgaris).